Consider the following 191-residue polypeptide: Ankyrin repeat domain-containing protein 22 (191 aa).

ANK repeat units lie at residues 39–68, 72–100, 101–130, and 134–163; these read NGDT…NVNL, KERT…MPVL, LIGY…EVNA, and YGCT…DPTI.

This Homo sapiens (Human) protein is Ankyrin repeat domain-containing protein 22 (ANKRD22).